A 114-amino-acid polypeptide reads, in one-letter code: T cell receptor beta variable 5-8 (114 aa).

The signal sequence occupies residues 1–21 (MGPRLLFWALLCLLGTGPVEA). The region spanning 22–114 (GVTQSPTHLI…SALYLCASSL (93 aa)) is the Ig-like domain. A disulfide bridge links Cys42 with Cys110. N-linked (GlcNAc...) asparagine glycosylation occurs at Asn90.

As to quaternary structure, alpha-beta TR is a heterodimer composed of an alpha and beta chain; disulfide-linked. The alpha-beta TR is associated with the transmembrane signaling CD3 coreceptor proteins to form the TR-CD3 (TcR or TCR). The assembly of alpha-beta TR heterodimers with CD3 occurs in the endoplasmic reticulum where a single alpha-beta TR heterodimer associates with one CD3D-CD3E heterodimer, one CD3G-CD3E heterodimer and one CD247 homodimer forming a stable octameric structure. CD3D-CD3E and CD3G-CD3E heterodimers preferentially associate with TR alpha and TR beta chains, respectively. The association of the CD247 homodimer is the last step of TcR assembly in the endoplasmic reticulum and is required for transport to the cell surface.

The protein localises to the cell membrane. V region of the variable domain of T cell receptor (TR) beta chain that participates in the antigen recognition. Alpha-beta T cell receptors are antigen specific receptors which are essential to the immune response and are present on the cell surface of T lymphocytes. Recognize peptide-major histocompatibility (MH) (pMH) complexes that are displayed by antigen presenting cells (APC), a prerequisite for efficient T cell adaptive immunity against pathogens. Binding of alpha-beta TR to pMH complex initiates TR-CD3 clustering on the cell surface and intracellular activation of LCK that phosphorylates the ITAM motifs of CD3G, CD3D, CD3E and CD247 enabling the recruitment of ZAP70. In turn ZAP70 phosphorylates LAT, which recruits numerous signaling molecules to form the LAT signalosome. The LAT signalosome propagates signal branching to three major signaling pathways, the calcium, the mitogen-activated protein kinase (MAPK) kinase and the nuclear factor NF-kappa-B (NF-kB) pathways, leading to the mobilization of transcription factors that are critical for gene expression and essential for T cell growth and differentiation. The T cell repertoire is generated in the thymus, by V-(D)-J rearrangement. This repertoire is then shaped by intrathymic selection events to generate a peripheral T cell pool of self-MH restricted, non-autoaggressive T cells. Post-thymic interaction of alpha-beta TR with the pMH complexes shapes TR structural and functional avidity. The sequence is that of T cell receptor beta variable 5-8 from Homo sapiens (Human).